The sequence spans 773 residues: Leucine-rich repeat and calponin homology domain-containing protein 2 (773 aa).

The segment at 1–46 (MAASQGGGGNSGGGGCSGGGSGGGGGAAGGGGGGGGGGGGGAGAGG) is disordered. 9 LRR repeats span residues 97-118 (NSGI…GYDL), 120-141 (DTTQ…VWLF), 143-164 (PLET…IKNL), 166-187 (MLTY…LFDL), 188-209 (PLKV…IGKL), 211-232 (DLME…MGKL), 234-256 (SLKE…GDLP), 257-277 (LVKL…YRKL), and 279-300 (HLQV…ICLK). Disordered regions lie at residues 324–409 (LDLP…QKDQ), 438–478 (FLKG…LKEV), and 573–633 (KYKS…SRQE). Basic and acidic residues-rich tracts occupy residues 386-396 (SNREQTSRNDS) and 440-466 (KGKE…KEQL). Residues 594-603 (AHMSAQSPVS) show a composition bias toward polar residues. A Calponin-homology (CH) domain is found at 650 to 763 (LREEREQIRQ…VTVQALLELP (114 aa)).

Functionally, may play a role in the organization of the cytoskeleton. This is Leucine-rich repeat and calponin homology domain-containing protein 2 (Lrch2) from Mus musculus (Mouse).